The sequence spans 399 residues: MTTYSFPNTKGKYGEFGGRFVPELLMPAVLELEKAYEDALKDESFNEELQTYLTEYIGRETPLYHAKKLTEHAGGAQIYLKREDLNHTGAHKINNTIGQALLTLRMGKKKVVAETGAGQHGVATATVCSLLGLECIVFMGEEDIKRQKLNVFRMELLGAEVVSVSQGSGTLKDAVNEALRYWVNNVNDTHYIIGSVVGPHPFPKIVRDFQSVIGKETKEQSMKKIGSLPDAVVACVGGGSNAMGMFYPFIDDKEVTLFGVEAAGAGLDTKQHAATLTGGSPGMLHGTFTYLLQDDCGQIEEAFSISAGLDYPGIGPEHSHLHQTKRVTYSSITDEEALEAFQLLSKTEGIIPALESAHAVSYATKLAKEMNPEQSIVICLSGRGDKDVEQVKERLEGEQ.

Lysine 92 is subject to N6-(pyridoxal phosphate)lysine.

This sequence belongs to the TrpB family. In terms of assembly, tetramer of two alpha and two beta chains. Pyridoxal 5'-phosphate is required as a cofactor.

It catalyses the reaction (1S,2R)-1-C-(indol-3-yl)glycerol 3-phosphate + L-serine = D-glyceraldehyde 3-phosphate + L-tryptophan + H2O. Its pathway is amino-acid biosynthesis; L-tryptophan biosynthesis; L-tryptophan from chorismate: step 5/5. The beta subunit is responsible for the synthesis of L-tryptophan from indole and L-serine. This Oceanobacillus iheyensis (strain DSM 14371 / CIP 107618 / JCM 11309 / KCTC 3954 / HTE831) protein is Tryptophan synthase beta chain.